A 319-amino-acid polypeptide reads, in one-letter code: Transaldolase (319 aa).

The active-site Schiff-base intermediate with substrate is lysine 126.

This sequence belongs to the transaldolase family. Type 1 subfamily. Homodimer.

Its subcellular location is the cytoplasm. The enzyme catalyses D-sedoheptulose 7-phosphate + D-glyceraldehyde 3-phosphate = D-erythrose 4-phosphate + beta-D-fructose 6-phosphate. It participates in carbohydrate degradation; pentose phosphate pathway; D-glyceraldehyde 3-phosphate and beta-D-fructose 6-phosphate from D-ribose 5-phosphate and D-xylulose 5-phosphate (non-oxidative stage): step 2/3. Functionally, transaldolase is important for the balance of metabolites in the pentose-phosphate pathway. This chain is Transaldolase, found in Bordetella petrii (strain ATCC BAA-461 / DSM 12804 / CCUG 43448).